The chain runs to 152 residues: 2-C-methyl-D-erythritol 2,4-cyclodiphosphate synthase (152 aa).

2 residues coordinate a divalent metal cation: Asp8 and His10. 4-CDP-2-C-methyl-D-erythritol 2-phosphate is bound by residues 8 to 10 (DSH) and 34 to 35 (HS). Residue His42 participates in a divalent metal cation binding. Residues 56 to 58 (DIG) and 61 to 65 (FPDTD) contribute to the 4-CDP-2-C-methyl-D-erythritol 2-phosphate site.

It belongs to the IspF family. In terms of assembly, homotrimer. A divalent metal cation is required as a cofactor.

The catalysed reaction is 4-CDP-2-C-methyl-D-erythritol 2-phosphate = 2-C-methyl-D-erythritol 2,4-cyclic diphosphate + CMP. It participates in isoprenoid biosynthesis; isopentenyl diphosphate biosynthesis via DXP pathway; isopentenyl diphosphate from 1-deoxy-D-xylulose 5-phosphate: step 4/6. Its function is as follows. Involved in the biosynthesis of isopentenyl diphosphate (IPP) and dimethylallyl diphosphate (DMAPP), two major building blocks of isoprenoid compounds. Catalyzes the conversion of 4-diphosphocytidyl-2-C-methyl-D-erythritol 2-phosphate (CDP-ME2P) to 2-C-methyl-D-erythritol 2,4-cyclodiphosphate (ME-CPP) with a corresponding release of cytidine 5-monophosphate (CMP). This Thermus thermophilus (strain ATCC BAA-163 / DSM 7039 / HB27) protein is 2-C-methyl-D-erythritol 2,4-cyclodiphosphate synthase.